We begin with the raw amino-acid sequence, 1022 residues long: Collagen alpha-2(VI) chain (1022 aa).

The first 27 residues, 1-27 (MSRRTAEMFQQAFLSTLLCVALVPLHA), serve as a signal peptide directing secretion. Residues 28-255 (QFDDEPVTSC…CYKMTCLEIA (228 aa)) form a nonhelical region region. The VWFA 1 domain occupies 44–168 (PISVYFVIDT…VITDGHVTGS (125 aa)). N-linked (GlcNAc...) asparagine glycans are attached at residues N141 and N215. The interval 256–590 (GPAGPKGYRG…PGPPGDPGLT (335 aa)) is triple-helical region. The interval 263 to 587 (YRGQKGAKGN…EGTPGPPGDP (325 aa)) is disordered. The segment covering 287 to 299 (DPGIEGPIGYPGP) has biased composition (low complexity). Basic and acidic residues predominate over residues 306–318 (KGEKGEIGSDGRR). The N-linked (GlcNAc...) asparagine glycan is linked to N327. 2 consecutive short sequence motifs (cell attachment site) follow at residues 348 to 350 (RGD) and 366 to 368 (RGD). The span at 363 to 377 (QGERGDEGMKGDPGR) shows a compositional bias: basic and acidic residues. The span at 389 to 399 (EKGSPGIPGNP) shows a compositional bias: low complexity. 5 short sequence motifs (cell attachment site) span residues 426–428 (RGD), 444–446 (RGD), 465–467 (RGD), 489–491 (RGD), and 498–500 (RGD). The tract at residues 514 to 519 (GFSYPG) is interruption in collagenous region. Gly residues predominate over residues 534 to 543 (GPKGGRGELG). Residues 591 to 1022 (DCDVMTYVRE…FFDRFIRWIC (432 aa)) are nonhelical region. 2 consecutive VWFA domains span residues 613 to 738 (ALDI…YDPR) and 833 to 957 (DIVF…ITGS). N630 and N897 each carry an N-linked (GlcNAc...) asparagine glycan.

The protein belongs to the type VI collagen family. As to quaternary structure, trimers composed of three different chains: alpha 1(VI), alpha 2(VI), and alpha 3(VI). In terms of processing, prolines at the third position of the tripeptide repeating unit (G-X-Y) are hydroxylated in some or all of the chains.

Its subcellular location is the secreted. The protein localises to the extracellular space. The protein resides in the extracellular matrix. In terms of biological role, collagen VI acts as a cell-binding protein. This chain is Collagen alpha-2(VI) chain (COL6A2), found in Gallus gallus (Chicken).